We begin with the raw amino-acid sequence, 542 residues long: Probable cysteine proteinase 361L (542 aa).

Active-site residues include C172, H382, and N414. A helical transmembrane segment spans residues 520 to 540; it reads TNNWYIYALIIIFILIIFFVL.

This sequence belongs to the peptidase C1 family.

The protein resides in the membrane. In terms of biological role, probable cysteine protease. In Acheta domesticus (House cricket), this protein is Probable cysteine proteinase 361L.